A 58-amino-acid chain; its full sequence is uncharacterized protein (58 aa).

Helical transmembrane passes span 7-27 and 29-49; these read IFDI…VAKT and YGTG…AYKI.

It is found in the cell membrane. This is an uncharacterized protein from Bacillus subtilis (strain 168).